We begin with the raw amino-acid sequence, 275 residues long: 2-dehydro-3-deoxyphosphooctonate aldolase (275 aa).

Belongs to the KdsA family.

It is found in the cytoplasm. It carries out the reaction D-arabinose 5-phosphate + phosphoenolpyruvate + H2O = 3-deoxy-alpha-D-manno-2-octulosonate-8-phosphate + phosphate. It functions in the pathway carbohydrate biosynthesis; 3-deoxy-D-manno-octulosonate biosynthesis; 3-deoxy-D-manno-octulosonate from D-ribulose 5-phosphate: step 2/3. It participates in bacterial outer membrane biogenesis; lipopolysaccharide biosynthesis. The chain is 2-dehydro-3-deoxyphosphooctonate aldolase from Francisella tularensis subsp. novicida (strain U112).